An 88-amino-acid polypeptide reads, in one-letter code: Small ribosomal subunit protein bS18 (88 aa).

The segment covering 1-11 (MTTANTTAKDN) has biased composition (low complexity). Positions 1–21 (MTTANTTAKDNAATKKRGRKA) are disordered.

Belongs to the bacterial ribosomal protein bS18 family. As to quaternary structure, part of the 30S ribosomal subunit. Forms a tight heterodimer with protein bS6.

In terms of biological role, binds as a heterodimer with protein bS6 to the central domain of the 16S rRNA, where it helps stabilize the platform of the 30S subunit. The chain is Small ribosomal subunit protein bS18 from Thermoanaerobacter pseudethanolicus (strain ATCC 33223 / 39E) (Clostridium thermohydrosulfuricum).